Here is a 659-residue protein sequence, read N- to C-terminus: Heparin-sulfate lyase (659 aa).

The N-terminal stretch at 1 to 24 is a signal peptide; the sequence is MTTKIFKRIIVFAVIALSSGNILA. Y294 functions as the Proton acceptor in the catalytic mechanism.

Belongs to the polysaccharide lyase 12 family.

It localises to the periplasm. The catalysed reaction is Elimination of sulfate, appears to act on linkages between N-acetyl-D-glucosamine and uronate. Product is an unsaturated sugar.. In terms of biological role, specifically cleaves heparan sulfate-rich regions of acidic polysaccharides. Does not act on N,O-desulfated glucosamine or N-acetyl-O-sulfated glucosamine linkages. Functions in cleaving metazoan heparan sulfate and providing carbon, nitrogen and sulfate sources for microorganisms. This is Heparin-sulfate lyase (hepC) from Pedobacter heparinus (strain ATCC 13125 / DSM 2366 / CIP 104194 / JCM 7457 / NBRC 12017 / NCIMB 9290 / NRRL B-14731 / HIM 762-3).